An 82-amino-acid chain; its full sequence is Small ribosomal subunit protein uS17 (82 aa).

Belongs to the universal ribosomal protein uS17 family. Part of the 30S ribosomal subunit.

Functionally, one of the primary rRNA binding proteins, it binds specifically to the 5'-end of 16S ribosomal RNA. In Shewanella frigidimarina (strain NCIMB 400), this protein is Small ribosomal subunit protein uS17.